The sequence spans 424 residues: Enolase (424 aa).

Position 164 (glutamine 164) interacts with (2R)-2-phosphoglycerate. The active-site Proton donor is glutamate 206. Aspartate 243, glutamate 284, and aspartate 311 together coordinate Mg(2+). 4 residues coordinate (2R)-2-phosphoglycerate: lysine 336, arginine 365, serine 366, and lysine 387. The active-site Proton acceptor is lysine 336.

It belongs to the enolase family. It depends on Mg(2+) as a cofactor.

Its subcellular location is the cytoplasm. The protein localises to the secreted. It is found in the cell surface. The catalysed reaction is (2R)-2-phosphoglycerate = phosphoenolpyruvate + H2O. It functions in the pathway carbohydrate degradation; glycolysis; pyruvate from D-glyceraldehyde 3-phosphate: step 4/5. In terms of biological role, catalyzes the reversible conversion of 2-phosphoglycerate (2-PG) into phosphoenolpyruvate (PEP). It is essential for the degradation of carbohydrates via glycolysis. The sequence is that of Enolase from Wolbachia sp. subsp. Drosophila simulans (strain wRi).